The sequence spans 121 residues: Large ribosomal subunit protein bL12 (121 aa).

Belongs to the bacterial ribosomal protein bL12 family. As to quaternary structure, homodimer. Part of the ribosomal stalk of the 50S ribosomal subunit. Forms a multimeric L10(L12)X complex, where L10 forms an elongated spine to which 2 to 4 L12 dimers bind in a sequential fashion. Binds GTP-bound translation factors.

Forms part of the ribosomal stalk which helps the ribosome interact with GTP-bound translation factors. Is thus essential for accurate translation. The sequence is that of Large ribosomal subunit protein bL12 from Ureaplasma parvum serovar 3 (strain ATCC 27815 / 27 / NCTC 11736).